The primary structure comprises 130 residues: Small ribosomal subunit protein uS8 (130 aa).

The protein belongs to the universal ribosomal protein uS8 family. Part of the 30S ribosomal subunit. Contacts proteins S5 and S12.

Functionally, one of the primary rRNA binding proteins, it binds directly to 16S rRNA central domain where it helps coordinate assembly of the platform of the 30S subunit. The polypeptide is Small ribosomal subunit protein uS8 (Yersinia enterocolitica serotype O:8 / biotype 1B (strain NCTC 13174 / 8081)).